Here is a 261-residue protein sequence, read N- to C-terminus: Arcelin-5A (261 aa).

The N-terminal stretch at 1 to 21 is a signal peptide; the sequence is MASSKLLSLALFLVLLTHANS. N-linked (GlcNAc...) asparagine glycans are attached at residues N43, N91, and N100. C167 and C203 are oxidised to a cystine. Residues 255-261 constitute a propeptide that is removed on maturation; it reads ILLNNIL.

This sequence belongs to the leguminous lectin family. In terms of assembly, monomer. In terms of processing, the C-terminal segment appears to be highly susceptible to proteolysis.

Seed storage. This carbohydrate-binding lectin has toxic effects on bean bruchid pests. This is Arcelin-5A (ARC5A) from Phaseolus vulgaris (Kidney bean).